We begin with the raw amino-acid sequence, 234 residues long: UPF0502 protein Reut_B4455 (234 aa).

This sequence belongs to the UPF0502 family.

The protein is UPF0502 protein Reut_B4455 of Cupriavidus pinatubonensis (strain JMP 134 / LMG 1197) (Cupriavidus necator (strain JMP 134)).